A 194-amino-acid chain; its full sequence is MNQPIEPDHINVPTEALESLRLRLTQVSHSLNTLQAQLHQPTLPPWSSLHNQFNVLLTQLVSLSSTITHQSDILQQTVTFPLPAFPTATEAGLMATLLRKKILPEVEEWCEEVKQKALGVKIRTVDQYGEWAAETVEEAKQEYEWYGLMTREEVDNGVKPPVYVAPEEEAGEGAKLTIEQILQFTCAGKMPTVA.

It belongs to the Mediator complex subunit 8 family. In terms of assembly, component of the Mediator complex.

The protein resides in the nucleus. Component of the Mediator complex, a coactivator involved in the regulated transcription of nearly all RNA polymerase II-dependent genes. Mediator functions as a bridge to convey information from gene-specific regulatory proteins to the basal RNA polymerase II transcription machinery. Mediator is recruited to promoters by direct interactions with regulatory proteins and serves as a scaffold for the assembly of a functional preinitiation complex with RNA polymerase II and the general transcription factors. This Yarrowia lipolytica (strain CLIB 122 / E 150) (Yeast) protein is Mediator of RNA polymerase II transcription subunit 8 (MED8).